Reading from the N-terminus, the 262-residue chain is MRRTLYRLMIELTNGRFTSYILRKFAQSRLSSIIIPSYAKVFQINQDEMEKGLKEYRTLHELFTRKLKEGKRSIDTDASSIVSPVDGVFADHGPIEDTKTFDIKGKRYSIVDMLGNEERATRYAGGTYMVIYLSPSHYHRIHSPLSGSVTERFVLGRKSYPVNAAGMEYGKEPLSKNYRSVTEVSSDGEHMALVKVGAMFVNSIELLHERDTVQKGEEMAYFTFGSTVVLLFEKDMIEVVQELKSGQELRLGEKIATRLAHK.

Residues Asp86, His142, and Ser226 each act as charge relay system; for autoendoproteolytic cleavage activity in the active site. Ser226 serves as the catalytic Schiff-base intermediate with substrate; via pyruvic acid; for decarboxylase activity. Ser226 is modified (pyruvic acid (Ser); by autocatalysis).

It belongs to the phosphatidylserine decarboxylase family. PSD-B subfamily. Prokaryotic type I sub-subfamily. Heterodimer of a large membrane-associated beta subunit and a small pyruvoyl-containing alpha subunit. The cofactor is pyruvate. Is synthesized initially as an inactive proenzyme. Formation of the active enzyme involves a self-maturation process in which the active site pyruvoyl group is generated from an internal serine residue via an autocatalytic post-translational modification. Two non-identical subunits are generated from the proenzyme in this reaction, and the pyruvate is formed at the N-terminus of the alpha chain, which is derived from the carboxyl end of the proenzyme. The autoendoproteolytic cleavage occurs by a canonical serine protease mechanism, in which the side chain hydroxyl group of the serine supplies its oxygen atom to form the C-terminus of the beta chain, while the remainder of the serine residue undergoes an oxidative deamination to produce ammonia and the pyruvoyl prosthetic group on the alpha chain. During this reaction, the Ser that is part of the protease active site of the proenzyme becomes the pyruvoyl prosthetic group, which constitutes an essential element of the active site of the mature decarboxylase.

Its subcellular location is the cell membrane. It catalyses the reaction a 1,2-diacyl-sn-glycero-3-phospho-L-serine + H(+) = a 1,2-diacyl-sn-glycero-3-phosphoethanolamine + CO2. Its pathway is phospholipid metabolism; phosphatidylethanolamine biosynthesis; phosphatidylethanolamine from CDP-diacylglycerol: step 2/2. Functionally, catalyzes the formation of phosphatidylethanolamine (PtdEtn) from phosphatidylserine (PtdSer). The polypeptide is Phosphatidylserine decarboxylase proenzyme (Bacillus cereus (strain B4264)).